The primary structure comprises 445 residues: 23S rRNA (uracil(1939)-C(5))-methyltransferase RlmD (445 aa).

One can recognise a TRAM domain in the interval 12-70 (SKQLSSKLSLNVTQLDHLGAGIAHHQGKIVFINGALPGETVQVQLTEQKKKFSRAKLLK). [4Fe-4S] cluster-binding residues include Cys-83, Cys-89, Cys-92, and Cys-171. 6 residues coordinate S-adenosyl-L-methionine: Gln-278, Phe-307, Asn-312, Glu-328, Asp-355, and Asp-375. The Nucleophile role is filled by Cys-401.

Belongs to the class I-like SAM-binding methyltransferase superfamily. RNA M5U methyltransferase family. RlmD subfamily.

The catalysed reaction is uridine(1939) in 23S rRNA + S-adenosyl-L-methionine = 5-methyluridine(1939) in 23S rRNA + S-adenosyl-L-homocysteine + H(+). Functionally, catalyzes the formation of 5-methyl-uridine at position 1939 (m5U1939) in 23S rRNA. This is 23S rRNA (uracil(1939)-C(5))-methyltransferase RlmD from Shewanella piezotolerans (strain WP3 / JCM 13877).